The chain runs to 235 residues: Motile sperm domain-containing protein 3 (235 aa).

Disordered regions lie at residues 1–30 (MRRG…PSGP) and 143–170 (ELQG…PFPE). The MSP domain occupies 33–145 (PVLVFPPDLV…RAPAYPLELQ (113 aa)). The next 2 helical transmembrane spans lie at 180 to 200 (SFLL…LPLQ) and 213 to 233 (VSLG…MVFL).

The protein resides in the membrane. The sequence is that of Motile sperm domain-containing protein 3 (MOSPD3) from Bos taurus (Bovine).